The chain runs to 105 residues: Large ribosomal subunit protein uL24 (105 aa).

The protein belongs to the universal ribosomal protein uL24 family. Part of the 50S ribosomal subunit.

In terms of biological role, one of two assembly initiator proteins, it binds directly to the 5'-end of the 23S rRNA, where it nucleates assembly of the 50S subunit. Functionally, one of the proteins that surrounds the polypeptide exit tunnel on the outside of the subunit. The chain is Large ribosomal subunit protein uL24 from Vibrio campbellii (strain ATCC BAA-1116).